Consider the following 532-residue polypeptide: SET and MYND domain-containing protein DDB_G0288495 (532 aa).

In terms of domain architecture, SET spans 25–448; that stretch reads PWIEVKSVSE…ENQELLITYI (424 aa). The MYND-type; degenerate zinc-finger motif lies at 70-116; the sequence is CTTCFKILLESNRHNFQTCPSCFQVNYCSNYCKQYSKIETKHTELEC. Residues 199 to 240 are a coiled coil; it reads INSKNNNEFENEEEEEEEQEQKGEGEQEENENNENNEKVKKK. Residues 204–234 form a disordered region; sequence NNEFENEEEEEEEQEQKGEGEQEENENNENN. Residues 207–217 are compositionally biased toward acidic residues; sequence FENEEEEEEEQ.

This sequence belongs to the class V-like SAM-binding methyltransferase superfamily.

In terms of biological role, probable methyltransferase. The protein is SET and MYND domain-containing protein DDB_G0288495 of Dictyostelium discoideum (Social amoeba).